The primary structure comprises 153 residues: Prostaglandin E synthase (153 aa).

Over 1–13 (MPPSGLELMNGQV) the chain is Lumenal. Residues 14–42 (LPAFLLCSALLVIKMYVVAVITGQVRLRK) traverse the membrane as a helical segment. Residue arginine 39 coordinates glutathione. Over 43 to 61 (KAFANPEDAQRHGGLQYCR) the chain is Cytoplasmic. A helical membrane pass occupies residues 62 to 91 (NDPDVERCLRAHRNDMETIYPFLFLGFVYS). 74 to 78 (RNDME) contributes to the glutathione binding site. Over 92–96 (FLGPN) the chain is Lumenal. The helical transmembrane segment at 97–120 (PFVARMHFLVFFLGRMVHTVAYLG) threads the bilayer. Glutathione-binding residues include histidine 114 and tyrosine 118. Residues 121–124 (KLRA) are Cytoplasmic-facing. The helical transmembrane segment at 125-153 (PTRSLAYTLAQLPCASMALQIVWEAARHL) threads the bilayer. 127-131 (RSLAY) contributes to the glutathione binding site.

The protein belongs to the MAPEG family. As to quaternary structure, homotrimer. The cofactor is glutathione.

The protein resides in the membrane. Its subcellular location is the cytoplasm. It is found in the perinuclear region. It carries out the reaction prostaglandin H2 = prostaglandin E2. It catalyses the reaction 2-glyceryl-prostaglandin H2 = 2-glyceryl-prostaglandin E2. The enzyme catalyses prostaglandin G2 = (15S)-15-hydroperoxy-prostaglandin E2. The catalysed reaction is 1-chloro-2,4-dinitrobenzene + glutathione = 2,4-dinitrophenyl-S-glutathione + chloride + H(+). It carries out the reaction (5S)-hydroperoxy-(6E,8Z,11Z,14Z)-eicosatetraenoate + 2 glutathione = (5S)-hydroxy-(6E,8Z,11Z,14Z)-eicosatetraenoate + glutathione disulfide + H2O. It participates in lipid metabolism; prostaglandin biosynthesis. Terminal enzyme of the cyclooxygenase (COX)-2-mediated prostaglandin E2 (PGE2) biosynthetic pathway. Catalyzes the glutathione-dependent oxidoreduction of prostaglandin endoperoxide H2 (PGH2) to prostaglandin E2 (PGE2) in response to inflammatory stimuli. Plays a key role in inflammation response, fever and pain. Also catalyzes the oxidoreduction of endocannabinoids into prostaglandin glycerol esters and PGG2 into 15-hydroperoxy-PGE2. In addition, displays low glutathione transferase and glutathione-dependent peroxidase activities, toward 1-chloro-2,4-dinitrobenzene and 5-hydroperoxyicosatetraenoic acid (5-HPETE), respectively. In Bos taurus (Bovine), this protein is Prostaglandin E synthase (PTGES).